We begin with the raw amino-acid sequence, 458 residues long: ATP synthase subunit beta (458 aa).

An ATP-binding site is contributed by 148–155 (GGAGVGKT).

Belongs to the ATPase alpha/beta chains family. F-type ATPases have 2 components, CF(1) - the catalytic core - and CF(0) - the membrane proton channel. CF(1) has five subunits: alpha(3), beta(3), gamma(1), delta(1), epsilon(1). CF(0) has three main subunits: a(1), b(2) and c(9-12). The alpha and beta chains form an alternating ring which encloses part of the gamma chain. CF(1) is attached to CF(0) by a central stalk formed by the gamma and epsilon chains, while a peripheral stalk is formed by the delta and b chains.

It localises to the cell inner membrane. The enzyme catalyses ATP + H2O + 4 H(+)(in) = ADP + phosphate + 5 H(+)(out). Functionally, produces ATP from ADP in the presence of a proton gradient across the membrane. The catalytic sites are hosted primarily by the beta subunits. The protein is ATP synthase subunit beta of Nitrosococcus oceani (strain ATCC 19707 / BCRC 17464 / JCM 30415 / NCIMB 11848 / C-107).